Consider the following 1503-residue polypeptide: Translocase of chloroplast 159, chloroplastic (1503 aa).

Residues 1-24 (MDSKSVTPEPTNPFYASSGQSGKT) show a composition bias toward polar residues. A disordered region spans residues 1-210 (MDSKSVTPEP…GGKVDVDDKS (210 aa)). A helical transmembrane segment spans residues 21-37 (SGKTYASVVAAAAAAAA). Serine 71 carries the post-translational modification Phosphoserine. 2 stretches are compositionally biased toward basic and acidic residues: residues 85 to 98 (KVSDEVDGSLKEDS) and 176 to 210 (SESKVKDVEEEDVGTKKDDEGESELGGKVDVDDKS). Residues serine 210, serine 281, and serine 288 each carry the phosphoserine modification. 2 disordered regions span residues 298-338 (KFTS…DVEK) and 429-464 (VHNKFDPIGQGEGGEVELESDKATEEGGGKLVSEGD). Over residues 447–456 (ESDKATEEGG) the composition is skewed to basic and acidic residues. Phosphoserine occurs at positions 448, 461, 589, 609, 630, 632, and 665. The segment at 610–633 (FGGKEVDQEPSGEGVTRVDGSESE) is disordered. Positions 781-804 (EEEKQKLEKLQSLRVKFLRLLQRL) form a coiled coil. The AIG1-type G domain occupies 853–1087 (IFSLNILVLG…RPQEPLDHRK (235 aa)). The tract at residues 862-869 (GKAGVGKS) is G1. Residues 865–870 (GVGKSA) and 884–889 (DAFGLS) each bind GTP. A Mg(2+)-binding site is contributed by serine 869. The segment at 884–887 (DAFG) is homodimerization. The segment at 889–893 (STTSV) is G2. Positions 909–912 (DTPG) are G3. Residues 947–952 (RLDTQT) form a homodimerization region. Residues 981–984 (THAA) are G4. GTP-binding positions include histidine 982 and 1035–1036 (EN). The segment at 1035-1037 (ENH) is G5. A coiled-coil region spans residues 1175–1203 (DYRVKLLQKKQWREELKRMKEMKKNGKKL). Positions 1203–1222 (LGESEFGYPGEEDDPENGAP) are disordered.

It belongs to the TRAFAC class TrmE-Era-EngA-EngB-Septin-like GTPase superfamily. AIG1/Toc34/Toc159-like paraseptin GTPase family. TOC159 subfamily. As to quaternary structure, homodimer and heterodimer with TOC33. Part of the TOC core complex that includes 1 protein for the specific recognition of transit peptides surrounded by a ring composed of four proteins forming translocation channels, and four to five GTP-binding proteins providing energy. This core complex can interact with components of the TIC complex to form a larger import complex. Chloroplastic protein precursor such as prSS (precursor of the RuBisCO small subunit) interacts with these complexes. The TOC complex contains a specific subset of polar lipids such as digalactosyldiacylglyceride (DGDG), phosphatidylcholine (PC) and phosphatidylglycerol (PG). Interacts with SP1. Requires Mg(2+) as cofactor. Post-translationally, phosphorylated by KOC1.

Its subcellular location is the plastid. It localises to the chloroplast outer membrane. The protein localises to the cytoplasm. Functionally, GTPase involved in protein precursor import into chloroplasts. Seems to recognize chloroplast-destined precursor proteins and regulate their presentation to the translocation channel through GTP hydrolysis. Required for chloroplast biogenesis. Probably specialized in the import of nuclear encoded photosynthetic preproteins from the cytoplasm to the chloroplast. The protein is Translocase of chloroplast 159, chloroplastic of Arabidopsis thaliana (Mouse-ear cress).